The sequence spans 330 residues: DNA primase small subunit PriS (330 aa).

Residues aspartate 101 and aspartate 103 contribute to the active site. The Zn(2+) site is built by cysteine 116, cysteine 119, cysteine 128, and aspartate 131. Aspartate 235 is a catalytic residue.

The protein belongs to the eukaryotic-type primase small subunit family. In terms of assembly, heterodimer of a small subunit (PriS) and a large subunit (PriL). Requires Mg(2+) as cofactor. It depends on Mn(2+) as a cofactor.

Catalytic subunit of DNA primase, an RNA polymerase that catalyzes the synthesis of short RNA molecules used as primers for DNA polymerase during DNA replication. The small subunit contains the primase catalytic core and has DNA synthesis activity on its own. Binding to the large subunit stabilizes and modulates the activity, increasing the rate of DNA synthesis while decreasing the length of the DNA fragments, and conferring RNA synthesis capability. The DNA polymerase activity may enable DNA primase to also catalyze primer extension after primer synthesis. May also play a role in DNA repair. In Saccharolobus islandicus (strain Y.N.15.51 / Yellowstone #2) (Sulfolobus islandicus), this protein is DNA primase small subunit PriS.